A 364-amino-acid chain; its full sequence is Probable tartrate dehydrogenase/decarboxylase TtuC (364 aa).

D222, D246, and D250 together coordinate Mn(2+).

Belongs to the isocitrate and isopropylmalate dehydrogenases family. Mg(2+) is required as a cofactor. Mn(2+) serves as cofactor. Requires K(+) as cofactor.

The protein resides in the cytoplasm. The enzyme catalyses tartrate + NAD(+) = 2-hydroxy-3-oxosuccinate + NADH + H(+). The catalysed reaction is (2R,3S)-tartrate + NAD(+) = 2-hydroxy-3-oxosuccinate + NADH + H(+). It catalyses the reaction (2R,3R)-tartrate + NAD(+) = 2-hydroxy-3-oxosuccinate + NADH + H(+). It carries out the reaction (2R,3R)-tartrate + H(+) = (R)-glycerate + CO2. The enzyme catalyses (R)-malate + NAD(+) = pyruvate + CO2 + NADH. It functions in the pathway carbohydrate acid metabolism; tartrate degradation; 2-hydroxy-3-oxosuccinate from L-tartrate: step 1/1. Its pathway is carbohydrate acid metabolism; tartrate degradation; 2-hydroxy-3-oxosuccinate from meso-tartrate: step 1/1. It participates in carbohydrate acid metabolism; tartrate degradation; D-glycerate from L-tartrate: step 1/1. Its function is as follows. Has multiple catalytic activities. Apart from catalyzing the oxidation of (+)-tartrate to oxaloglycolate, also converts meso-tartrate to D-glycerate and catalyzes the oxidative decarboxylation of D-malate to pyruvate. The protein is Probable tartrate dehydrogenase/decarboxylase TtuC (ttuC) of Agrobacterium vitis (Rhizobium vitis).